A 307-amino-acid polypeptide reads, in one-letter code: NAD kinase 1 (307 aa).

Catalysis depends on aspartate 67, which acts as the Proton acceptor. Residues 67 to 68 (DG), 149 to 150 (ND), arginine 179, and aspartate 181 contribute to the NAD(+) site.

The protein belongs to the NAD kinase family. It depends on a divalent metal cation as a cofactor.

Its subcellular location is the cytoplasm. It carries out the reaction NAD(+) + ATP = ADP + NADP(+) + H(+). Involved in the regulation of the intracellular balance of NAD and NADP, and is a key enzyme in the biosynthesis of NADP. Catalyzes specifically the phosphorylation on 2'-hydroxyl of the adenosine moiety of NAD to yield NADP. This chain is NAD kinase 1, found in Prochlorococcus marinus (strain SARG / CCMP1375 / SS120).